The sequence spans 257 residues: 3-deoxy-manno-octulosonate cytidylyltransferase (257 aa).

This sequence belongs to the KdsB family.

The protein resides in the cytoplasm. The catalysed reaction is 3-deoxy-alpha-D-manno-oct-2-ulosonate + CTP = CMP-3-deoxy-beta-D-manno-octulosonate + diphosphate. It participates in nucleotide-sugar biosynthesis; CMP-3-deoxy-D-manno-octulosonate biosynthesis; CMP-3-deoxy-D-manno-octulosonate from 3-deoxy-D-manno-octulosonate and CTP: step 1/1. The protein operates within bacterial outer membrane biogenesis; lipopolysaccharide biosynthesis. Functionally, activates KDO (a required 8-carbon sugar) for incorporation into bacterial lipopolysaccharide in Gram-negative bacteria. In Xylella fastidiosa (strain M23), this protein is 3-deoxy-manno-octulosonate cytidylyltransferase.